The primary structure comprises 399 residues: Dihydrolipoyllysine-residue succinyltransferase component of 2-oxoglutarate dehydrogenase complex (399 aa).

Positions 2-77 constitute a Lipoyl-binding domain; it reads AIDIKAPTFP…LSGELLGKLT (76 aa). The residue at position 43 (Lys-43) is an N6-lipoyllysine. The 38-residue stretch at 104-141 folds into the Peripheral subunit-binding (PSBD) domain; the sequence is ILSPAARKIAEENAIAADSITGTGKGGRVTKEDAVAAA. Residues His-370 and Asp-374 contribute to the active site.

It belongs to the 2-oxoacid dehydrogenase family. In terms of assembly, forms a 24-polypeptide structural core with octahedral symmetry. Part of the 2-oxoglutarate dehydrogenase (OGDH) complex composed of E1 (2-oxoglutarate dehydrogenase), E2 (dihydrolipoamide succinyltransferase) and E3 (dihydrolipoamide dehydrogenase); the complex contains multiple copies of the three enzymatic components (E1, E2 and E3). It depends on (R)-lipoate as a cofactor.

The enzyme catalyses N(6)-[(R)-dihydrolipoyl]-L-lysyl-[protein] + succinyl-CoA = N(6)-[(R)-S(8)-succinyldihydrolipoyl]-L-lysyl-[protein] + CoA. It functions in the pathway amino-acid degradation; L-lysine degradation via saccharopine pathway; glutaryl-CoA from L-lysine: step 6/6. E2 component of the 2-oxoglutarate dehydrogenase (OGDH) complex which catalyzes the second step in the conversion of 2-oxoglutarate to succinyl-CoA and CO(2). This chain is Dihydrolipoyllysine-residue succinyltransferase component of 2-oxoglutarate dehydrogenase complex (sucB), found in Azotobacter vinelandii.